The following is a 501-amino-acid chain: MTEQVQLDENKLIAERRGKLDHIRQACKANGHPNDFRRDSLAGDLQAEFGEKTKEELEELNHVVAIAGRVMAKRGPFLLIQEVSGKIQAYAAKEVQKELKDKYQGLDIGDIIGVKGALHKSGKGDLYVNMEEYVLLTKALRPLPEKFHGLTDQEMRYRQRYVDLIVNDDSRHAFIVRSKVVAAIRNFMVDKGFMEVETPMMHVIPGGASARPFVTHHNALDVDMYLRIAPELYLKRLVVGGFERVFEINRNFRNEGLSPRHNPEFTMMEFYMAYADYNDLMDLTEEMLSTVATSVLGSDKMPYGEHTVDFGGKYARMSMLDAIKQYNPDHAEIQALTYEGVKDRDLMVSIAKSVHVDVESFWTCGQLLEEIFGETAEPKLMQPTFITEYPADISPLARRNDDNDFITDRFEFFIGGREVANGFSELNDAQDQDERFKAQVNAKESGDDEAMYYDADYITALEHGLPPTAGQGIGIDRLVMLLTNTHTIRDVILFPSMRPQA.

Mg(2+) is bound by residues Glu-411 and Glu-418.

The protein belongs to the class-II aminoacyl-tRNA synthetase family. Homodimer. Requires Mg(2+) as cofactor.

It localises to the cytoplasm. The catalysed reaction is tRNA(Lys) + L-lysine + ATP = L-lysyl-tRNA(Lys) + AMP + diphosphate. The protein is Lysine--tRNA ligase of Aliivibrio fischeri (strain ATCC 700601 / ES114) (Vibrio fischeri).